Reading from the N-terminus, the 1083-residue chain is Ubiquitin carboxyl-terminal hydrolase 28 (1083 aa).

The tract at residues 60–82 is disordered; that stretch reads DQRVKEPSHDTAATEPSEVEESA. Serine 67 bears the Phosphoserine mark. The UIM domain maps to 97 to 116; that stretch reads DNKDDLQAAIALSLLESPNI. Lysine 99 participates in a covalent cross-link: Glycyl lysine isopeptide (Lys-Gly) (interchain with G-Cter in SUMO2). The USP domain maps to 162 to 656; it reads VGLKNVGNTC…SAYCLMYIND (495 aa). The active-site Nucleophile is cysteine 171. Serine 376 carries the phosphoserine modification. The tract at residues 483 to 539 is disordered; that stretch reads DLTAKESSSPKSCSQNAEGSFSSPEDALPNSEVMNGPFTSPHSSLEMPAPPPAPRTV. The span at 487-505 shows a compositional bias: polar residues; sequence KESSSPKSCSQNAEGSFSS. A Phosphoserine modification is found at serine 556. The active-site Proton acceptor is histidine 606. The disordered stretch occupies residues 703-728; the sequence is EEQSCKIPQMESSPNSSSQDFSTSQE. The segment covering 714-728 has biased composition (low complexity); it reads SSPNSSSQDFSTSQE. At serine 720 the chain carries Phosphoserine. Position 1054 is a phosphothreonine (threonine 1054).

Belongs to the peptidase C19 family. USP28 subfamily. Interacts with ZNF304. Interacts with PRKD1. Interacts with TP53BP1. Interacts with FBXW7; following DNA damage, dissociates from FBXW7 leading to degradation of MYC. In terms of processing, degraded upon nickel ion level or hypoxia exposure. Post-translationally, phosphorylated upon DNA damage at Ser-67 and Ser-720, by ATM or ATR. Phosphorylated by PRKD1.

Its subcellular location is the nucleus. It localises to the nucleoplasm. It carries out the reaction Thiol-dependent hydrolysis of ester, thioester, amide, peptide and isopeptide bonds formed by the C-terminal Gly of ubiquitin (a 76-residue protein attached to proteins as an intracellular targeting signal).. In terms of biological role, deubiquitinase involved in DNA damage response checkpoint and MYC proto-oncogene stability. Involved in DNA damage induced apoptosis by specifically deubiquitinating proteins of the DNA damage pathway such as CLSPN. Also involved in G2 DNA damage checkpoint, by deubiquitinating CLSPN, and preventing its degradation by the anaphase promoting complex/cyclosome (APC/C). In contrast, it does not deubiquitinate PLK1. Specifically deubiquitinates MYC in the nucleoplasm, leading to prevent MYC degradation by the proteasome: acts by specifically interacting with FBXW7 (FBW7alpha) in the nucleoplasm and counteracting ubiquitination of MYC by the SCF(FBXW7) complex. Deubiquitinates ZNF304, hence preventing ZNF304 degradation by the proteasome and leading to the activated KRAS-mediated promoter hypermethylation and transcriptional silencing of tumor suppressor genes (TSGs) in a subset of colorectal cancers (CRC) cells. The sequence is that of Ubiquitin carboxyl-terminal hydrolase 28 (Usp28) from Rattus norvegicus (Rat).